The sequence spans 96 residues: Putative pterin-4-alpha-carbinolamine dehydratase (96 aa).

The protein belongs to the pterin-4-alpha-carbinolamine dehydratase family.

It catalyses the reaction (4aS,6R)-4a-hydroxy-L-erythro-5,6,7,8-tetrahydrobiopterin = (6R)-L-erythro-6,7-dihydrobiopterin + H2O. This Prochlorococcus marinus (strain MIT 9313) protein is Putative pterin-4-alpha-carbinolamine dehydratase.